The primary structure comprises 354 residues: Uroporphyrinogen decarboxylase (354 aa).

Residues R25–R29, D75, Y152, T207, and H330 contribute to the substrate site.

This sequence belongs to the uroporphyrinogen decarboxylase family. In terms of assembly, homodimer.

The protein resides in the cytoplasm. It catalyses the reaction uroporphyrinogen III + 4 H(+) = coproporphyrinogen III + 4 CO2. It participates in porphyrin-containing compound metabolism; protoporphyrin-IX biosynthesis; coproporphyrinogen-III from 5-aminolevulinate: step 4/4. Functionally, catalyzes the decarboxylation of four acetate groups of uroporphyrinogen-III to yield coproporphyrinogen-III. This Xanthomonas euvesicatoria pv. vesicatoria (strain 85-10) (Xanthomonas campestris pv. vesicatoria) protein is Uroporphyrinogen decarboxylase.